The following is a 347-amino-acid chain: GMP reductase (347 aa).

108-131 (ADFIKLSEILAMSEELNFICIDIA) contributes to the NADP(+) binding site. Glycine 181 and glycine 183 together coordinate K(+). The active-site Thioimidate intermediate is cysteine 186. An NADP(+)-binding site is contributed by 216 to 239 (IIGDGGCSCAGDVAKAFGGGADFV).

It belongs to the IMPDH/GMPR family. GuaC type 1 subfamily. Homotetramer.

The enzyme catalyses IMP + NH4(+) + NADP(+) = GMP + NADPH + 2 H(+). Functionally, catalyzes the irreversible NADPH-dependent deamination of GMP to IMP. It functions in the conversion of nucleobase, nucleoside and nucleotide derivatives of G to A nucleotides, and in maintaining the intracellular balance of A and G nucleotides. This Shewanella halifaxensis (strain HAW-EB4) protein is GMP reductase.